Reading from the N-terminus, the 130-residue chain is Large ribosomal subunit protein bL20 (130 aa).

It belongs to the bacterial ribosomal protein bL20 family.

Functionally, binds directly to 23S ribosomal RNA and is necessary for the in vitro assembly process of the 50S ribosomal subunit. It is not involved in the protein synthesizing functions of that subunit. The protein is Large ribosomal subunit protein bL20 of Salinispora arenicola (strain CNS-205).